The sequence spans 299 residues: Non-structural protein V (299 aa).

3 disordered regions span residues 56-79, 137-186, and 205-229; these read DHQDISKPCFPAAGPGKSSMSRCH, DGVE…ETVE, and KAGKTLVVPPIPSQERPTASEKPIK. Residues 137 to 160 are compositionally biased toward acidic residues; that stretch reads DGVEVWGGDEESENSDVDSGEPDP. 8 residues coordinate Zn(2+): H232, C251, C255, C267, C269, C272, C276, and C279.

Belongs to the paramyxoviruses V protein family. As to quaternary structure, interacts with host IFIH1/MDA5 and DHX58/LGP2. Interacts with host TYK2; this interaction inhibits the type I interferon signaling pathway.

It is found in the host cytoplasm. Functionally, plays an essential role in the inhibition of host immune response. Prevents the establishment of cellular antiviral state by blocking interferon-alpha/beta (IFN-alpha/beta) production and signaling pathway. Interacts with host IFIH1/MDA5 and DHX58/LGP2 to inhibit the transduction pathway involved in the activation of IFN-beta promoter, thus protecting the virus against cell antiviral state. Blocks the type I interferon signaling pathway by interacting with host TYK2 and thereby inhibiting downstream STAT1 and STAT2 phosphorylation. The polypeptide is Non-structural protein V (P/V) (Bos indicus (Zebu)).